The sequence spans 64 residues: Large ribosomal subunit protein bL35 (64 aa).

Over residues 22 to 31 the composition is skewed to basic residues; it reads GKVKHGHAYR. Positions 22–64 are disordered; that stretch reads GKVKHGHAYRSHLAQSKTTKQKRQSRKSTLMNNSDFKRLKKLI.

Belongs to the bacterial ribosomal protein bL35 family.

The polypeptide is Large ribosomal subunit protein bL35 (Mesomycoplasma hyopneumoniae (strain 232) (Mycoplasma hyopneumoniae)).